A 192-amino-acid polypeptide reads, in one-letter code: RNA pyrophosphohydrolase (192 aa).

In terms of domain architecture, Nudix hydrolase spans 6–149 (GYRPNVGIVI…KKDVYRKVMK (144 aa)). The Nudix box signature appears at 38 to 59 (GGINDNETAEQAMYRELYEEAG).

It belongs to the Nudix hydrolase family. RppH subfamily. The cofactor is a divalent metal cation.

Accelerates the degradation of transcripts by removing pyrophosphate from the 5'-end of triphosphorylated RNA, leading to a more labile monophosphorylated state that can stimulate subsequent ribonuclease cleavage. The chain is RNA pyrophosphohydrolase from Histophilus somni (strain 129Pt) (Haemophilus somnus).